A 1066-amino-acid polypeptide reads, in one-letter code: Thyrotropin-releasing hormone-degrading ectoenzyme (1066 aa).

Residues 1–14 show a composition bias toward basic and acidic residues; it reads MALDGERGEQEEEK. The disordered stretch occupies residues 1–43; the sequence is MALDGERGEQEEEKKKKKKKKKRKKKEEEGAEKSSSPFAATMG. The Cytoplasmic segment spans residues 1–81; sequence MALDGERGEQ…ERHIAVHKRL (81 aa). Residues 15–25 show a composition bias toward basic residues; the sequence is KKKKKKKKRKK. Thr71 is modified (phosphothreonine; by PKC). Residues 82–102 form a helical; Signal-anchor for type II membrane protein membrane-spanning segment; the sequence is VLAFAVSIVALLAVTMLAVLL. Over 103–1066 the chain is Extracellular; sequence SLRFDECGAS…FQWLGKAMRH (964 aa). Residues 118-176 are disordered; the sequence is TDGGLGGFPERDSNSSFPGSARRNHHAGGESSQRESGEVGTPGTPSAQPPSEEEREQWQ. Asn131, Asn202, Asn217, Asn264, and Asn380 each carry an N-linked (GlcNAc...) asparagine glycan. Substrate is bound at residue 446–450; it reads AAMEN. His482 lines the Zn(2+) pocket. Glu483 functions as the Proton acceptor in the catalytic mechanism. His486 and Glu505 together coordinate Zn(2+). N-linked (GlcNAc...) asparagine glycosylation is found at Asn647, Asn676, Asn691, Asn705, Asn726, Asn842, and Asn948.

The protein belongs to the peptidase M1 family. In terms of assembly, homodimer; disulfide-linked. It depends on Zn(2+) as a cofactor.

It localises to the membrane. It carries out the reaction Release of the N-terminal pyroglutamyl group from pGlu-|-His-Xaa tripeptides and pGlu-|-His-Xaa-Gly tetrapeptides.. In terms of biological role, specific inactivation of TRH after its release. The sequence is that of Thyrotropin-releasing hormone-degrading ectoenzyme (Trhde) from Mus musculus (Mouse).